The sequence spans 388 residues: Acyl-CoA dehydrogenase fadE12 (388 aa).

It belongs to the acyl-CoA dehydrogenase family. The cofactor is FAD.

It carries out the reaction a 2,3-saturated acyl-CoA + A = a 2,3-dehydroacyl-CoA + AH2. The sequence is that of Acyl-CoA dehydrogenase fadE12 (fadE12) from Mycobacterium bovis (strain ATCC BAA-935 / AF2122/97).